Here is a 544-residue protein sequence, read N- to C-terminus: Chaperonin GroEL (544 aa).

ATP is bound by residues 29–32 (TLGP), Lys50, 86–90 (DGTTT), Gly414, and Asp495.

Belongs to the chaperonin (HSP60) family. As to quaternary structure, forms a cylinder of 14 subunits composed of two heptameric rings stacked back-to-back. Interacts with the co-chaperonin GroES.

The protein resides in the cytoplasm. The enzyme catalyses ATP + H2O + a folded polypeptide = ADP + phosphate + an unfolded polypeptide.. In terms of biological role, together with its co-chaperonin GroES, plays an essential role in assisting protein folding. The GroEL-GroES system forms a nano-cage that allows encapsulation of the non-native substrate proteins and provides a physical environment optimized to promote and accelerate protein folding. The sequence is that of Chaperonin GroEL from Treponema pallidum subsp. pallidum (strain SS14).